The primary structure comprises 791 residues: Ataxin-1 (791 aa).

A compositionally biased stretch (basic and acidic residues) spans 1-30; that stretch reads MKSNQERSNECLPPKKREIPATSRPSEEKA. Residues 1–36 form a disordered region; sequence MKSNQERSNECLPPKKREIPATSRPSEEKATALPSD. A Glycyl lysine isopeptide (Lys-Gly) (interchain with G-Cter in SUMO) cross-link involves residue Lys-16. Phosphoserine is present on residues Ser-81 and Ser-87. 2 disordered regions span residues 187–240 and 298–402; these read SQAP…TSPP and EVLN…HRSY. Residue Lys-193 forms a Glycyl lysine isopeptide (Lys-Gly) (interchain with G-Cter in SUMO) linkage. Position 213 is a phosphoserine (Ser-213). The residue at position 218 (Thr-218) is a Phosphothreonine. Composition is skewed to polar residues over residues 219–236, 312–327, and 362–388; these read QQNQ…SGRA, ASSS…SSKS, and PNSS…TLND. Position 229 is a phosphoserine (Ser-229). The segment at 470–580 is self-association; sequence VGSPDMDTPG…TEDFIQSAEI (111 aa). Residues 514-791 form an interaction with USP7 region; it reads LVTQAAYPAM…CIEGRSNVGK (278 aa). Positions 516–742 are RNA-binding; it reads TQAAYPAMVQ…FLSKIEPSKP (227 aa). An AXH domain is found at 538–669; sequence SPTTASPTLP…SLTLKNLKNG (132 aa). Residues Lys-585, Lys-672, and Lys-721 each participate in a glycyl lysine isopeptide (Lys-Gly) (interchain with G-Cter in SUMO) cross-link. The interval 736 to 774 is disordered; sequence KIEPSKPTATRKRRWSAPETRKLEKSEDEPPLTLPKPSL. A Phosphoserine modification is found at Ser-751. Residues 770-773 carry the Nuclear localization signal motif; sequence PKPS.

The protein belongs to the ATXN1 family. In terms of assembly, homooligomer. Interacts with PQBP1, UBQLN4 and USP7. Interacts with ANP32A. Interacts with CIC. Directly interacts with RBPJ; this interaction is disrupted in the presence of Notch intracellular domain. Interacts with ATXN1L; competes with ATXN1L for RBPJ-binding. Found in a complex with CIC and ATXN1L. In terms of processing, ubiquitinated by UBE3A, leading to its degradation by the proteasome. The presence of poly-Gln repeats in trangenic models developed to replicate phenotypes of the spinocerebellar ataxia 1 disease (SCA1) impair ubiquitination and degradation, leading to accumulation of Atxn1 in neurons and subsequent toxicity. Sumoylation is dependent on nuclear localization and phosphorylation at Ser-751. Expressed in the cortex and hypothalamus (at protein level). Widely expressed. In brain, the pattern of distribution is limited to neuron populations.

It is found in the cytoplasm. It localises to the nucleus. Functionally, chromatin-binding factor that repress Notch signaling in the absence of Notch intracellular domain by acting as a CBF1 corepressor. Binds to the HEY promoter and might assist, along with NCOR2, RBPJ-mediated repression. May be involved in RNA metabolism. In concert with CIC and ATXN1L, involved in brain development. This chain is Ataxin-1 (Atxn1), found in Mus musculus (Mouse).